Here is a 138-residue protein sequence, read N- to C-terminus: Large ribosomal subunit protein uL16 (138 aa).

Residues 1-17 (MLIPRKVKHRKQHHPRQ) are compositionally biased toward basic residues. The tract at residues 1–22 (MLIPRKVKHRKQHHPRQRGIAS) is disordered.

It belongs to the universal ribosomal protein uL16 family. As to quaternary structure, part of the 50S ribosomal subunit.

Binds 23S rRNA and is also seen to make contacts with the A and possibly P site tRNAs. The chain is Large ribosomal subunit protein uL16 from Mycobacterium leprae (strain Br4923).